The chain runs to 131 residues: SPbeta prophage-derived uncharacterized protein YomZ (131 aa).

The polypeptide is SPbeta prophage-derived uncharacterized protein YomZ (yomZ) (Bacillus subtilis (strain 168)).